A 464-amino-acid polypeptide reads, in one-letter code: Soluble pyridine nucleotide transhydrogenase (464 aa).

FAD is bound at residue 35-44; the sequence is DSRRVVGGNC.

Belongs to the class-I pyridine nucleotide-disulfide oxidoreductase family. It depends on FAD as a cofactor.

Its subcellular location is the cytoplasm. The enzyme catalyses NAD(+) + NADPH = NADH + NADP(+). Its function is as follows. Conversion of NADPH, generated by peripheral catabolic pathways, to NADH, which can enter the respiratory chain for energy generation. This is Soluble pyridine nucleotide transhydrogenase from Pseudomonas aeruginosa (strain LESB58).